Reading from the N-terminus, the 466-residue chain is UDP-N-acetylmuramoylalanine--D-glutamate ligase (466 aa).

117-123 contributes to the ATP binding site; sequence GTKGKTT.

This sequence belongs to the MurCDEF family.

The protein resides in the cytoplasm. The catalysed reaction is UDP-N-acetyl-alpha-D-muramoyl-L-alanine + D-glutamate + ATP = UDP-N-acetyl-alpha-D-muramoyl-L-alanyl-D-glutamate + ADP + phosphate + H(+). It functions in the pathway cell wall biogenesis; peptidoglycan biosynthesis. In terms of biological role, cell wall formation. Catalyzes the addition of glutamate to the nucleotide precursor UDP-N-acetylmuramoyl-L-alanine (UMA). The sequence is that of UDP-N-acetylmuramoylalanine--D-glutamate ligase from Roseiflexus sp. (strain RS-1).